The following is a 122-amino-acid chain: Riboflavin kinase (122 aa).

4–9 lines the CDP pocket; it reads GFGEGA. The Mg(2+) site is built by Thr-33 and Asn-35. FMN contacts are provided by Thr-84 and Glu-92. Position 97–100 (97–100) interacts with CDP; it reads VNLR.

It belongs to the archaeal riboflavin kinase family. The cofactor is Mg(2+).

It carries out the reaction riboflavin + CTP = CDP + FMN + H(+). Its pathway is cofactor biosynthesis; FMN biosynthesis; FMN from riboflavin (CTP route): step 1/1. Catalyzes the CTP-dependent phosphorylation of riboflavin (vitamin B2) to form flavin mononucleotide (FMN). The chain is Riboflavin kinase from Methanothermobacter thermautotrophicus (strain ATCC 29096 / DSM 1053 / JCM 10044 / NBRC 100330 / Delta H) (Methanobacterium thermoautotrophicum).